The sequence spans 289 residues: Shikimate dehydrogenase (NADP(+)) (289 aa).

Shikimate-binding positions include 20-22 and Ser-67; that span reads SIS. Lys-71 acts as the Proton acceptor in catalysis. Residues Asn-92 and Asp-107 each contribute to the shikimate site. Residues 132-136 and Val-230 contribute to the NADP(+) site; that span reads GGGGA. Position 232 (Tyr-232) interacts with shikimate. An NADP(+)-binding site is contributed by Gly-253.

Belongs to the shikimate dehydrogenase family. Homodimer.

It carries out the reaction shikimate + NADP(+) = 3-dehydroshikimate + NADPH + H(+). It participates in metabolic intermediate biosynthesis; chorismate biosynthesis; chorismate from D-erythrose 4-phosphate and phosphoenolpyruvate: step 4/7. Functionally, involved in the biosynthesis of the chorismate, which leads to the biosynthesis of aromatic amino acids. Catalyzes the reversible NADPH linked reduction of 3-dehydroshikimate (DHSA) to yield shikimate (SA). In Streptococcus mutans serotype c (strain ATCC 700610 / UA159), this protein is Shikimate dehydrogenase (NADP(+)).